Consider the following 367-residue polypeptide: uncharacterized protein (367 aa).

The protein belongs to the Gfo/Idh/MocA family.

This is an uncharacterized protein from Streptococcus pneumoniae serotype 4 (strain ATCC BAA-334 / TIGR4).